A 206-amino-acid polypeptide reads, in one-letter code: MTKRQESKYKIDRRMGENIWGRPKSPVNRREYGPGQHGQRRKGKLSDYGVQLRAKQKLKGFYGNISEKQFRGIYKEANRLRGDTSEILIGLLERRLDAVVYRAKFVMTPFAARQFVGHGHILVNGKRVNVPSYRVREGDVIEVREKSKQLAIVLEASQSAERDTPDYIEVDHDKMVAKFVRIPAFSDVPYAAHMEPNLVIEFYSRS.

The span at 1–16 shows a compositional bias: basic and acidic residues; it reads MTKRQESKYKIDRRMG. Residues 1 to 46 form a disordered region; sequence MTKRQESKYKIDRRMGENIWGRPKSPVNRREYGPGQHGQRRKGKLS. An S4 RNA-binding domain is found at 94–154; that stretch reads RRLDAVVYRA…EKSKQLAIVL (61 aa).

This sequence belongs to the universal ribosomal protein uS4 family. As to quaternary structure, part of the 30S ribosomal subunit. Contacts protein S5. The interaction surface between S4 and S5 is involved in control of translational fidelity.

In terms of biological role, one of the primary rRNA binding proteins, it binds directly to 16S rRNA where it nucleates assembly of the body of the 30S subunit. With S5 and S12 plays an important role in translational accuracy. The polypeptide is Small ribosomal subunit protein uS4 (Parvibaculum lavamentivorans (strain DS-1 / DSM 13023 / NCIMB 13966)).